The following is a 126-amino-acid chain: Fluoride-specific ion channel FluC (126 aa).

The next 4 membrane-spanning stretches (helical) occupy residues 7–27, 36–56, 74–94, and 98–118; these read LWLALGGAVGAVCRQAAVLLL, FPAAVLLINVLGSFLLGLTLA, GVLGAFTTFSTFSTELDGLLL, and GGLALAYAALSVGLGLTAAVA. Na(+)-binding residues include glycine 77 and threonine 80.

This sequence belongs to the fluoride channel Fluc/FEX (TC 1.A.43) family.

The protein resides in the cell membrane. The catalysed reaction is fluoride(in) = fluoride(out). Its activity is regulated as follows. Na(+) is not transported, but it plays an essential structural role and its presence is essential for fluoride channel function. Functionally, fluoride-specific ion channel. Important for reducing fluoride concentration in the cell, thus reducing its toxicity. The chain is Fluoride-specific ion channel FluC from Deinococcus radiodurans (strain ATCC 13939 / DSM 20539 / JCM 16871 / CCUG 27074 / LMG 4051 / NBRC 15346 / NCIMB 9279 / VKM B-1422 / R1).